Consider the following 228-residue polypeptide: NOI-like protein (228 aa).

Residues 56-75 show a composition bias toward basic and acidic residues; sequence AQDHQHSEKHHNDTSTDYHV. Disordered regions lie at residues 56–87 and 99–133; these read AQDH…HRRE and RPHR…RNSD. Basic residues predominate over residues 76-86; the sequence is VKQHRRKHHRR. The span at 118 to 133 shows a compositional bias: polar residues; it reads HGTSATMSSSVKRNSD.

Belongs to the RIN4 family.

The polypeptide is NOI-like protein (Elaeis oleifera (American oil palm)).